The following is a 550-amino-acid chain: Nucleoside hydrolase 4 (550 aa).

It belongs to the IUNH family.

The protein resides in the cytoplasm. Functionally, may be involved in the degradation of nucleosides. The chain is Nucleoside hydrolase 4 from Arabidopsis thaliana (Mouse-ear cress).